The primary structure comprises 513 residues: Na(+)/H(+) antiporter NhaB (513 aa).

12 helical membrane-spanning segments follow: residues 23–43, 52–72, 97–117, 120–140, 144–164, 202–222, 238–258, 303–323, 348–368, 391–411, 447–467, and 475–495; these read LALI…PFVA, IFTL…LLAI, LLLM…LFIF, LLLS…AAAF, FLDA…FYGI, LMMH…VGEP, FFLR…LTCL, AIIG…VGLI, TESL…AVII, LFYI…VGTI, ATPN…APLI, and VWMA…CVEF.

The protein belongs to the NhaB Na(+)/H(+) (TC 2.A.34) antiporter family.

The protein resides in the cell inner membrane. The enzyme catalyses 2 Na(+)(in) + 3 H(+)(out) = 2 Na(+)(out) + 3 H(+)(in). Functionally, na(+)/H(+) antiporter that extrudes sodium in exchange for external protons. The chain is Na(+)/H(+) antiporter NhaB from Escherichia coli O45:K1 (strain S88 / ExPEC).